A 239-amino-acid chain; its full sequence is MPASWPPRTVIRKASGLRTLESALYRNGLGPVAGVDEVGRGACAGPLVVAACVLGPNRLESLAALDDSKKLGEKERERLFPVIRRYALAYHVVFIPSEEVDRRGVHVANIEGMRRAVAGLSVRPGYVLSDGFRVPGLPMPSLPVVGGDAAAACIAAASVLAKVSRDRLMVAMEREHPGYGFAEHKGYSTPAHTAALAELGPCAQHRYSFINVRRLVTAGTPQISGGLTDAEPGQCCELG.

The region spanning 30-221 (GPVAGVDEVG…VRRLVTAGTP (192 aa)) is the RNase H type-2 domain. The a divalent metal cation site is built by Asp-36, Glu-37, and Asp-130.

It belongs to the RNase HII family. Mn(2+) is required as a cofactor. The cofactor is Mg(2+).

Its subcellular location is the cytoplasm. The enzyme catalyses Endonucleolytic cleavage to 5'-phosphomonoester.. Its function is as follows. Endonuclease that specifically degrades the RNA of RNA-DNA hybrids. In Mycobacterium sp. (strain KMS), this protein is Ribonuclease HII.